The primary structure comprises 448 residues: Methionine aminopeptidase 2 (448 aa).

The interval 1–94 (MAAQVTDALK…PRVLLSNLFP (94 aa)) is disordered. A compositionally biased stretch (acidic residues) spans 37–50 (AEAEDSDDDDEEPV). Residues 61-74 (KKKRKRKKKPKKKA) show a composition bias toward basic residues. His-201 provides a ligand contact to substrate. Positions 221, 232, and 301 each coordinate a divalent metal cation. Residue His-309 participates in substrate binding. 2 residues coordinate a divalent metal cation: Glu-334 and Glu-429.

This sequence belongs to the peptidase M24A family. Methionine aminopeptidase eukaryotic type 2 subfamily. Co(2+) is required as a cofactor. It depends on Zn(2+) as a cofactor. The cofactor is Mn(2+). Fe(2+) serves as cofactor.

Its subcellular location is the cytoplasm. It catalyses the reaction Release of N-terminal amino acids, preferentially methionine, from peptides and arylamides.. Functionally, cotranslationally removes the N-terminal methionine from nascent proteins. The N-terminal methionine is often cleaved when the second residue in the primary sequence is small and uncharged (Met-Ala-, Cys, Gly, Pro, Ser, Thr, or Val). This Botryotinia fuckeliana (strain B05.10) (Noble rot fungus) protein is Methionine aminopeptidase 2.